Reading from the N-terminus, the 469-residue chain is Glutamate--tRNA ligase (469 aa).

The 'HIGH' region signature appears at 11–21 (PSPTGFIHLGN). A compositionally biased stretch (basic and acidic residues) spans 118–131 (GEKPRYDGTWRPEP). A disordered region spans residues 118–139 (GEKPRYDGTWRPEPGKVLPEPP). The 'KMSKS' region signature appears at 243–247 (KMSKR). Lys-246 provides a ligand contact to ATP.

It belongs to the class-I aminoacyl-tRNA synthetase family. Glutamate--tRNA ligase type 1 subfamily. As to quaternary structure, monomer.

It localises to the cytoplasm. The enzyme catalyses tRNA(Glu) + L-glutamate + ATP = L-glutamyl-tRNA(Glu) + AMP + diphosphate. Functionally, catalyzes the attachment of glutamate to tRNA(Glu) in a two-step reaction: glutamate is first activated by ATP to form Glu-AMP and then transferred to the acceptor end of tRNA(Glu). In Burkholderia pseudomallei (strain 1106a), this protein is Glutamate--tRNA ligase.